The chain runs to 46 residues: Photosystem II reaction center protein K (46 aa).

Positions 1 to 9 are excised as a propeptide; that stretch reads MTTLALVLA. The chain crosses the membrane as a helical span at residues 18–38; sequence FAPIVDVLPVIPVFFILLAFV.

This sequence belongs to the PsbK family. PSII is composed of 1 copy each of membrane proteins PsbA, PsbB, PsbC, PsbD, PsbE, PsbF, PsbH, PsbI, PsbJ, PsbK, PsbL, PsbM, PsbT, PsbX, PsbY, PsbZ, Psb30/Ycf12, at least 3 peripheral proteins of the oxygen-evolving complex and a large number of cofactors. It forms dimeric complexes. This protein is tightly associated with CP43 (psbC), one of the core proteins.

The protein localises to the plastid. Its subcellular location is the chloroplast thylakoid membrane. One of the components of the core complex of photosystem II (PSII). PSII is a light-driven water:plastoquinone oxidoreductase that uses light energy to abstract electrons from H(2)O, generating O(2) and a proton gradient subsequently used for ATP formation. It consists of a core antenna complex that captures photons, and an electron transfer chain that converts photonic excitation into a charge separation. Required for assembly and/or stability of PSII. In Chlamydomonas reinhardtii (Chlamydomonas smithii), this protein is Photosystem II reaction center protein K.